We begin with the raw amino-acid sequence, 524 residues long: 11-oxo-beta-amyrin 30-oxidase (524 aa).

Residues 9–29 form a helical membrane-spanning segment; the sequence is GTTVIISVLSVLLAVIPWYLL. Cys-472 is a heme binding site.

This sequence belongs to the cytochrome P450 family. Requires heme as cofactor. Expressed in flowers. Detected in roots upon salt treatment.

Its subcellular location is the membrane. The catalysed reaction is 11-oxo-beta-amyrin + 3 reduced [NADPH--hemoprotein reductase] + 3 O2 = glycyrrhetinate + 3 oxidized [NADPH--hemoprotein reductase] + 4 H2O + 4 H(+). Functionally, involved in the biosynthesis of triterpenoid saponins. Catalyzes three sequential oxidation steps at C-30 of 11-oxo-beta-amyrin. Also able to catalyze sequential C-30 hydroxylation of beta-amyrin to produce 30-hydroxy-beta-amyrin and 11-deoxoglycyrrhetinic acid. This is 11-oxo-beta-amyrin 30-oxidase (CYP72A63) from Medicago truncatula (Barrel medic).